The following is a 490-amino-acid chain: 5'-3' exonuclease PLD3 (490 aa).

Topologically, residues 1–38 (MKPKLMYQELKVPAEEPANELPMNEIEAWKAAEKKARW) are cytoplasmic. The helical; Signal-anchor for type II membrane protein transmembrane segment at 39 to 59 (VLLVLILAVVGFGALMTQLFL) threads the bilayer. Residues 60 to 490 (WEYGDLHLFG…DSVGNACRLL (431 aa)) are Lumenal-facing. 2 disulfides stabilise this stretch: Cys-77/Cys-239 and Cys-81/Cys-237. N-linked (GlcNAc...) asparagine glycosylation is found at Asn-97 and Asn-132. Residues 196-223 (THGVLHTKFWVVDQTHFYLGSANMDWRS) form the PLD phosphodiesterase 1 domain. Residues His-201, Lys-203, and Asp-208 contribute to the active site. Residue His-201 is the Proton donor of the active site. 2 residues coordinate phosphate: His-201 and Lys-203. Asn-218 serves as a coordination point for phosphate. Asn-236, Asn-284, and Asn-387 each carry an N-linked (GlcNAc...) asparagine glycan. Cysteines 366 and 487 form a disulfide. The PLD phosphodiesterase 2 domain maps to 411–437 (YARVNHNKYMVTERATYIGTSNWSGNY). Residue His-416 participates in phosphate binding. His-416 acts as the Nucleophile in catalysis. Position 438 (Phe-438) interacts with Mg(2+).

The protein belongs to the phospholipase D family. In terms of assembly, homodimer. Interacts with APP. N-glycosylated. Post-translationally, proteolytically processed to a soluble form that is stable within endosomes and lysosomes. During transport through the secretory pathway becomes proteolysed by cysteine proteases, thereby releasing a stable soluble lysosomal lumenal polypeptide, whereas the transmembrane-bound fragment is rapidly degraded. Its transport route to lysosomes involves ubiquitination and the ESCRT complex. In terms of processing, ubiquitinated. Ubiquitination mediates sorting into lysosomes.

The protein resides in the endoplasmic reticulum membrane. It is found in the lysosome lumen. Its subcellular location is the early endosome membrane. The protein localises to the late endosome membrane. It localises to the golgi apparatus membrane. The protein resides in the endosome membrane. The catalysed reaction is Exonucleolytic cleavage in the 5'- to 3'-direction to yield nucleoside 3'-phosphates.. It carries out the reaction a 5'-end 5'-dephospho-ribonucleotidyl-ribonucleotide-RNA + H2O = a ribonucleoside 3'-phosphate + a 5'-end dephospho-ribonucleoside-RNA + H(+). It catalyses the reaction a ribonucleoside 3'-phosphate-2'-3'-cyclophospho-GMP + H2O = a ribonucleoside 3'-phosphate + 2',3'-cyclophospho-GMP + H(+). The enzyme catalyses a 5'-end 5'-dephospho-2'-deoxyribonucleotidyl-2'-deoxyribonucleotide in single-stranded DNA + H2O = a 5'-end dephospho-2'-deoxyribonucleoside in single-stranded DNA + a 2'-deoxyribonucleoside 3'-phosphate + H(+). The catalysed reaction is a 5'-end 5'-phospho-2'-deoxyribonucleotide in single-stranded DNA + H2O = a 5'-end 5'-dephospho-2'-deoxyribonucleotide in single-stranded DNA + phosphate. It carries out the reaction a 3-lyso-sn-glycero-1-phospho-(3'-acyl-1'-sn-glycerol) + a 1-acyl-sn-glycerol = a 3-acyl-sn-glycero-1-phospho-(3'-acyl-1'-sn-glycerol) + glycerol. It catalyses the reaction 3-lyso-sn-glycero-1-phospho-(3'-(9Z-octadecenoyl)-1'-sn-glycerol) + 1-(9Z-octadecenoyl)-sn-glycerol = 3-(9Z-octadecenoyl)-sn-glycero-1-phospho-(3'-(9Z-octadecenoyl)-1'-sn-glycerol) + glycerol. Its function is as follows. 5'-&gt;3' exonuclease that hydrolyzes the phosphodiester bond of single-stranded DNA (ssDNA) and RNA molecules to form nucleoside 3'-monophosphates and 5'-end 5'-hydroxy deoxyribonucleotide/ribonucleotide fragments. Partially redundant with PLD4, can cleave all four nucleotides displaying higher efficiency for ssDNA and RNA fragments initiated with uridine and guanosine residues and lower efficiency for cytidine-initiated substrates. As a result, it does not always degrade polynucleotides to the single nucleotide level, it can stall at specific sites sparing certain fragments from exonucleolytic degradation. Processes self and pathogenic ssDNA and RNA molecules that reach the endolysosomal compartment via phagocytosis or autophagy and may serve as 'danger' signals for recognition by innate immune receptors such as toll-like receptors (TLRs). Degrades mitochondrial CpG-rich ssDNA fragments to prevent TLR9 activation and autoinflammatory response, but it can cleave viral RNA to generate ligands for TLR7 activation and initiate antiviral immune responses. In plasmacytoid dendritic cells, it cooperates with endonuclease RNASET2 to release 2',3'-cyclic guanosine monophosphate (2',3'-cGMP), a potent stimulatory ligand for TLR7. Produces 2',3'-cGMPs and cytidine-rich RNA fragments that occupy TLR7 ligand-binding pockets and trigger a signaling-competent state. Can exert polynucleotide phosphatase activity toward 5'-phosphorylated ssDNA substrates although at a slow rate. Transphosphatidylase that catalyzes the exchange with R to S stereo-inversion of the glycerol moiety between (S,R)-lysophosphatidylglycerol (LPG) and monoacylglycerol (MAG) substrates to yield (S,S)-bis(monoacylglycero)phosphate (BMP). Can synthesize a variety of (S,S)-BMPs representing the main phospholipid constituent of lysosomal intralumenal vesicle (ILV) membranes that bind acid hydrolases for lipid degradation. Regulates the homeostasis and interorganellar communication of the endolysosomal system with an overall impact on cellular removal of dysfunctional organelles via autophagy as well as proper protein and lipid turnover. May play a role in myotube formation in response to ER stress. This is 5'-3' exonuclease PLD3 (PLD3) from Pongo abelii (Sumatran orangutan).